A 330-amino-acid chain; its full sequence is Probable allantoicase (330 aa).

This sequence belongs to the allantoicase family.

The enzyme catalyses allantoate + H2O = (S)-ureidoglycolate + urea. Its pathway is nitrogen metabolism; (S)-allantoin degradation; (S)-ureidoglycolate from allantoate (aminidohydrolase route): step 1/1. The polypeptide is Probable allantoicase (Photobacterium profundum (strain SS9)).